The sequence spans 832 residues: MPLSYQHFRRLLLLDDEAGPLEEELPRLADEDLNRRVAEDLNLGNLNVSIPWTHKVGNFTGLYSSTVPVFNPYWKTPSFPNIHLHQDIIKKCEQFVGPLTVNEKRRLQLIMPARFYPKVTKYLPLDKGIKPYYPEHLVNHYFQTRHYLHTLWKAGILYKRETTHSASFCGSPYSWEQELQHGAESFHQQSSGILSRPPVGSSLQSKHSKSRLGLQSQQGHLARRQQGRSWSIRARIHPTARRPFGVEPSGSGHNTNLASKSASCLYQSPDRKAAYPAVSTFEKHSSSGHAVELHNLPPNSARSQGERPVFPCWWLQFRNSKPCSDYCLSHIVNLLEDWGPCAEHGEHHIRTPRTPARVTGGVFLVDKNPHNTAESRLVVDFSQFSRGNYRVSWPKFAVPNLQSLTNLLSSNLSWLSLDVSAAFYHLPLHPAAMPHLLVGSSGLSRYVARLSSNSRIFNHQRGTMQNLHDYCSRNLYVSLLLLYKTFGRKLHLYSHPIILGFRKIPMGVGLSPFLLAQFTSAICSVVRRAFPHCLAFSYMDDVVLGAKSVSHLESLFTAVTNFLLSLGIHLNPNKTKRWGYSLNFMGYVIGCYGSLPQDHIIQKIKECFRKLPVNRPIDWKVCQRIVGLLGFAAPFTQCGYPALMPLYACIQSRQAFTFSPTYKAFLCQQYLNLYPVARQRPGLCQVFADATPTGWGLVMGHQRMRGTFLAPLPIHTAELLAACFARSRSGANILGTDNSVVLSRKYTSFPWLLGCAANWILRGTSFVYVPSALNPADDPSRGRLGLSRPLLRLPFRPTTGRTSLYADSPSVPSHLPDRVHFASPLHVAWRPP.

Positions 1–177 (MPLSYQHFRR…FCGSPYSWEQ (177 aa)) are terminal protein domain (TP). A spacer region spans residues 178 to 335 (ELQHGAESFH…YCLSHIVNLL (158 aa)). The interval 186-229 (FHQQSSGILSRPPVGSSLQSKHSKSRLGLQSQQGHLARRQQGRS) is disordered. Residues 336–679 (EDWGPCAEHG…YLNLYPVARQ (344 aa)) are polymerase/reverse transcriptase domain (RT). Residues 346 to 589 (EHHIRTPRTP…YSLNFMGYVI (244 aa)) enclose the Reverse transcriptase domain. Positions 418, 540, and 541 each coordinate Mg(2+).

It belongs to the hepadnaviridae P protein family.

The catalysed reaction is DNA(n) + a 2'-deoxyribonucleoside 5'-triphosphate = DNA(n+1) + diphosphate. It catalyses the reaction Endonucleolytic cleavage to 5'-phosphomonoester.. With respect to regulation, activated by host HSP70 and HSP40 in vitro to be able to bind the epsilon loop of the pgRNA. Because deletion of the RNase H region renders the protein partly chaperone-independent, the chaperones may be needed indirectly to relieve occlusion of the RNA-binding site by this domain. Inhibited by several reverse-transcriptase inhibitors: Lamivudine, Adefovir and Entecavir. In terms of biological role, multifunctional enzyme that converts the viral RNA genome into dsDNA in viral cytoplasmic capsids. This enzyme displays a DNA polymerase activity that can copy either DNA or RNA templates, and a ribonuclease H (RNase H) activity that cleaves the RNA strand of RNA-DNA heteroduplexes in a partially processive 3'- to 5'-endonucleasic mode. Neo-synthesized pregenomic RNA (pgRNA) are encapsidated together with the P protein, and reverse-transcribed inside the nucleocapsid. Initiation of reverse-transcription occurs first by binding the epsilon loop on the pgRNA genome, and is initiated by protein priming, thereby the 5'-end of (-)DNA is covalently linked to P protein. Partial (+)DNA is synthesized from the (-)DNA template and generates the relaxed circular DNA (RC-DNA) genome. After budding and infection, the RC-DNA migrates in the nucleus, and is converted into a plasmid-like covalently closed circular DNA (cccDNA). The activity of P protein does not seem to be necessary for cccDNA generation, and is presumably released from (+)DNA by host nuclear DNA repair machinery. This chain is Protein P, found in Hepatitis B virus genotype D (isolate Germany/1-91/1991) (HBV-D).